Here is a 238-residue protein sequence, read N- to C-terminus: uncharacterized protein (238 aa).

Transmembrane regions (helical) follow at residues 16–36, 44–64, 81–101, and 123–143; these read HLII…IGLE, VGVK…IVSI, PMRL…GVIL, and IGIA…VMIL.

The protein belongs to the MgtC/SapB family.

The protein localises to the cell inner membrane. This is an uncharacterized protein from Haemophilus influenzae (strain ATCC 51907 / DSM 11121 / KW20 / Rd).